A 2073-amino-acid chain; its full sequence is Dedicator of cytokinesis protein 11 (2073 aa).

A Phosphoserine modification is found at Ser12. Phosphothreonine is present on Thr16. Phosphoserine occurs at positions 23 and 161. The PH domain occupies 165–272; that stretch reads GVIKQGWLHK…WLIMLKKIIQ (108 aa). Tyr248 is subject to Phosphotyrosine. Phosphoserine is present on residues Ser306 and Ser445. A C2 DOCK-type domain is found at 640–818; that stretch reads KNHLYVYPLQ…PLLKIKTHLE (179 aa). Residues 1227–1267 are disordered; it reads QNGHGIKREDSRGSLIPEGATGFPDPGSTSENTRQSSSRSS. Residues Ser1237 and Ser1240 each carry the phosphoserine modification. Positions 1254–1267 are enriched in low complexity; that stretch reads STSENTRQSSSRSS. A DOCKER domain is found at 1609–2036; it reads KSYASTPELR…LSDIIHEQIL (428 aa).

It belongs to the DOCK family. Interacts with CDC42. In terms of tissue distribution, expressed in spleen, thymus, mesenteric lymph nodes (MLN), bone marrow and peripheral blood lymphocytes. Enriched in B-cells from germinal centers. Expressed in B-, T- and dendritic cells as well as Purkinje cells.

Its function is as follows. Guanine nucleotide-exchange factor (GEF) that activates CDC42 by exchanging bound GDP for free GTP. Required for marginal zone (MZ) B-cell development, is associated with early bone marrow B-cell development, MZ B-cell formation, MZ B-cell number and marginal metallophilic macrophages morphology. Facilitates filopodia formation through the activation of CDC42. In Mus musculus (Mouse), this protein is Dedicator of cytokinesis protein 11.